The primary structure comprises 285 residues: Ribosomal RNA large subunit methyltransferase F (285 aa).

This sequence belongs to the methyltransferase superfamily. METTL16/RlmF family.

Its subcellular location is the cytoplasm. It catalyses the reaction adenosine(1618) in 23S rRNA + S-adenosyl-L-methionine = N(6)-methyladenosine(1618) in 23S rRNA + S-adenosyl-L-homocysteine + H(+). In terms of biological role, specifically methylates the adenine in position 1618 of 23S rRNA. This is Ribosomal RNA large subunit methyltransferase F from Christiangramia forsetii (strain DSM 17595 / CGMCC 1.15422 / KT0803) (Gramella forsetii).